The sequence spans 373 residues: 3 beta-hydroxysteroid dehydrogenase/Delta 5--&gt;4-isomerase type 2 (373 aa).

Catalysis depends on tyrosine 155, which acts as the Proton acceptor. Lysine 159 contacts NAD(+). Residues 288–308 form a helical membrane-spanning segment; the sequence is VALLYWLGFLLELVNFLLRPV.

The protein belongs to the 3-beta-HSD family. In terms of tissue distribution, high levels in adrenal gland, kidney and male liver. Low levels in female liver.

Its subcellular location is the endoplasmic reticulum membrane. The protein resides in the mitochondrion membrane. The enzyme catalyses a 3beta-hydroxy-Delta(5)-steroid + NAD(+) = a 3-oxo-Delta(5)-steroid + NADH + H(+). It carries out the reaction a 3-oxo-Delta(5)-steroid = a 3-oxo-Delta(4)-steroid. The catalysed reaction is pregnenolone + NAD(+) = pregn-5-ene-3,20-dione + NADH + H(+). It catalyses the reaction pregn-5-ene-3,20-dione = progesterone. The enzyme catalyses 3beta-hydroxyandrost-5-en-17-one + NAD(+) = androst-5-ene-3,17-dione + NADH + H(+). It carries out the reaction androst-5-ene-3,17-dione = androst-4-ene-3,17-dione. Its pathway is lipid metabolism; steroid biosynthesis. 3-beta-HSD is a bifunctional enzyme, that catalyzes the oxidative conversion of Delta(5)-ene-3-beta-hydroxy steroid, and the oxidative conversion of ketosteroids. The 3-beta-HSD enzymatic system plays a crucial role in the biosynthesis of all classes of hormonal steroids. In Mesocricetus auratus (Golden hamster), this protein is 3 beta-hydroxysteroid dehydrogenase/Delta 5--&gt;4-isomerase type 2 (HSD3B2).